Reading from the N-terminus, the 129-residue chain is Protein LLP homolog (129 aa).

A compositionally biased stretch (basic residues) spans 1 to 21 (MAKSLRSKWKRKMRAEKRKKN). Residues 1–27 (MAKSLRSKWKRKMRAEKRKKNAPKEAS) are disordered. Residues lysine 67 and lysine 74 each participate in a glycyl lysine isopeptide (Lys-Gly) (interchain with G-Cter in SUMO2) cross-link. A compositionally biased stretch (basic residues) spans 100-122 (RQRKRLKAKREKRKGKSKAKAVK). Residues 100–129 (RQRKRLKAKREKRKGKSKAKAVKVAKGLAW) form a disordered region.

It belongs to the learning-associated protein family. In terms of assembly, interacts with CTCF, MYO1C and with the transcriptional machinery, including RNA polymerase II and TBP.

Its subcellular location is the nucleus. The protein localises to the nucleolus. It localises to the chromosome. Functionally, in hippocampal neurons, regulates dendritic and spine growth and synaptic transmission. The polypeptide is Protein LLP homolog (LLPH) (Homo sapiens (Human)).